We begin with the raw amino-acid sequence, 571 residues long: Cytoplasmic polyadenylation element-binding protein 2 (571 aa).

Disordered stretches follow at residues 1-23 and 51-75; these read MSKS…NGDR and FKQN…VSQE. A compositionally biased stretch (basic and acidic residues) spans 61 to 75; the sequence is SESRHENEENKVSQE. In terms of domain architecture, RRM spans 435-517; it reads LVAFIGGVPR…KRVEIKPYFF (83 aa).

Its function is as follows. Cytoplasmic polyadenylation element binding protein that binds to and regulates the translation of specific mRNAs. The sequence is that of Cytoplasmic polyadenylation element-binding protein 2 (cpb-2) from Caenorhabditis remanei (Caenorhabditis vulgaris).